A 107-amino-acid polypeptide reads, in one-letter code: Serine-rich and transmembrane domain-containing protein 1 (107 aa).

A helical membrane pass occupies residues 43 to 63 (IYVSIFLSLLAFLLLLLIIAL).

The protein resides in the membrane. The sequence is that of Serine-rich and transmembrane domain-containing protein 1 (Sertm1) from Mus musculus (Mouse).